We begin with the raw amino-acid sequence, 128 residues long: Iron-sulfur cluster insertion protein ErpA (128 aa).

Positions 56, 120, and 122 each coordinate iron-sulfur cluster.

Belongs to the HesB/IscA family. Homodimer. Iron-sulfur cluster serves as cofactor.

Its function is as follows. Required for insertion of 4Fe-4S clusters for at least IspG. This Xylella fastidiosa (strain M23) protein is Iron-sulfur cluster insertion protein ErpA.